A 65-amino-acid polypeptide reads, in one-letter code: Lantipeptide Flvbeta.h (65 aa).

Positions 1 to 27 (MERYGHLAGVIPVDEIDDMFESNVIGG) are cleaved as a propeptide — cleaved by FlvT. 2,3-didehydrobutyrine; by FlvM2 is present on Thr-28. The lanthionine (Ser-Cys); by FlvM2 cross-link spans 29-33 (SSIDC). A 2,3-didehydroalanine (Ser); by FlvM2 modification is found at Ser-30. 2,3-didehydrobutyrine; by FlvM2 is present on Thr-44. Positions 48 to 54 (TVRIEFC) form a cross-link, beta-methyllanthionine (Thr-Cys); by FlvM2. Residues 56–59 (SAAC) constitute a cross-link (lanthionine (Ser-Cys); by FlvM2). The segment at residues 60 to 63 (TYSC) is a cross-link (beta-methyllanthionine (Thr-Cys); by FlvM2).

Contains LL-lanthionine, DL-lanthionine, and DL-beta-methyllanthionine, when coepressed in E.coli with the flavecin synthetase FlvM2.

Its subcellular location is the secreted. Lanthionine-containing peptide that does probably not show antibacterial activity, since its analog [+2]Flvbeta.h does not show antibacterial activity against M.luteus. Also does not show antibiotic activity when tested with [Del2]Flvalpha.a, an analog of Flvalpha.a, which is encoded by the same operon than Flvbeta.h. The bactericidal activity of lantibiotics is based on depolarization of energized bacterial cytoplasmic membranes, initiated by the formation of aqueous transmembrane pores. This Ruminococcus flavefaciens protein is Lantipeptide Flvbeta.h.